Reading from the N-terminus, the 98-residue chain is Capsid assembly scaffolding protein (98 aa).

Residues 40–62 (VSEYNDLTKSHEKLAAEKDDLIV) adopt a coiled-coil conformation.

This sequence belongs to the phi29likevirus scaffolding protein family. Homodimer. Interacts non-specifically with DNA; probably binds DNA in the early stages of DNA packaging.

Scaffolding protein involved in the icosahedric procapsid assembly. Coassembles with the capsid proteins to form the procapsid. The scaffolding protein is found within the capsid as a serie of concentric shells. During DNA packaging, the scaffolding protein molecules are released from the procapsid. The sequence is that of Capsid assembly scaffolding protein (7) from Bacillus subtilis (Bacteriophage phi-29).